The following is a 207-amino-acid chain: Urease accessory protein UreG (207 aa).

12–19 (GPVGAGKT) provides a ligand contact to GTP.

It belongs to the SIMIBI class G3E GTPase family. UreG subfamily. In terms of assembly, homodimer. UreD, UreF and UreG form a complex that acts as a GTP-hydrolysis-dependent molecular chaperone, activating the urease apoprotein by helping to assemble the nickel containing metallocenter of UreC. The UreE protein probably delivers the nickel.

It is found in the cytoplasm. Functionally, facilitates the functional incorporation of the urease nickel metallocenter. This process requires GTP hydrolysis, probably effectuated by UreG. The protein is Urease accessory protein UreG of Cereibacter sphaeroides (strain ATCC 17025 / ATH 2.4.3) (Rhodobacter sphaeroides).